Reading from the N-terminus, the 384-residue chain is MNVYQRPLMPWLPSGGRVRVAVVFGGRSNEHAVSCLSAGSILRNLDRQRFDVVAVGITPEGTWMLTDPNPDALAIANRQLPAVSCESGIELTLPADPRRSGQLVSLSHGAGLGAGEVLTSVDVVFPVLHGPYGEDGTIQGLLELARVPYVGAGVLASAAGMDKEFTKKLFAAEGLPLSAYTVLRPLRPTLHRQECERLSLPVFVKPARGGSSIGISRVSSWGQLPSAIAYARRHDPKVIVEAAVNGRELECGVLEMPDGTVAASAVGEIRVAGVSGSEDSFYDFTTKYLDDAAELDVPAKVDDDVADEVRQLAIQAFRAIDCQGLARVDFFLTDDGPVINEINTMPGFTMTSMYPKLWAVSSVDYPTLLATMVDTALARGVGMR.

The 208-residue stretch at 167 to 374 (KKLFAAEGLP…YPTLLATMVD (208 aa)) folds into the ATP-grasp domain. 195–250 (CERLSLPVFVKPARGGSSIGISRVSSWGQLPSAIAYARRHDPKVIVEAAVNGRELE) lines the ATP pocket. Mg(2+)-binding residues include aspartate 329, glutamate 341, and asparagine 343.

The protein belongs to the D-alanine--D-alanine ligase family. The cofactor is Mg(2+). Requires Mn(2+) as cofactor.

Its subcellular location is the cytoplasm. The enzyme catalyses 2 D-alanine + ATP = D-alanyl-D-alanine + ADP + phosphate + H(+). Its pathway is cell wall biogenesis; peptidoglycan biosynthesis. Cell wall formation. The sequence is that of D-alanine--D-alanine ligase from Mycobacterium leprae (strain TN).